The following is a 270-amino-acid chain: Mevalonyl-coenzyme A hydratase sidH (270 aa).

The PTS1-type peroxisomal targeting signal motif lies at 268-270; sequence SKL.

This sequence belongs to the enoyl-CoA hydratase/isomerase family.

It localises to the peroxisome. Its pathway is siderophore biosynthesis. In terms of biological role, mevalonyl-coenzyme A hydratase; part of the siderophore biosynthetic pathway. Aspergillus fumigatus produces 4 types of siderophores, low-molecular-mass iron chelators, including excreted fusarinine C (FsC) and triacetylfusarinine C (TAFC) for iron uptake and intacellular ferricrocin (FC) for hyphal and hydroxyferricrocin (HFC) for conidial iron distribution and storage. TAFC consists of 3 N(2)-acetyl-N(5)-anhydromevalonyl-N(5)-hydroxyornithine residues cyclically linked by ester bonds; FC is a cyclic hexapeptide with the structure Gly-Ser-Gly-(N(5)-acetyl-N(5)-hydroxyornithine)x3. The biosynthesis of all four siderophores depends on the hydroxylation of ornithine, catalyzed by the monooxygenase sidA. Subsequently, the pathways for biosynthesis of extra- and intracellular siderophores split. For biosynthesis of extracellular siderophores, the transacylase sidF transfers anhydromevalonyl to N(5)-hydroxyornithine. The required anhydromevalonyl-CoA moiety is derived from mevalonate by CoA ligation and dehydration catalyzed by sidI and sidH respectively. The acetylation of N(5)-hydroxyornithine for FC biosynthesis involves the constitutively expressed sidL. FC is hydroxylated to HFC by an as yet uncharacterized enzyme during conidiation. Assembly of fusarinine C (FsC) and FC is catalyzed by two different nonribosomal peptide synthetases (NRPS), sidD and sidC respectively. Subsequently, sidG catalyzes N2-acetylation of FsC for forming TAFC. Both extra- and intracellular siderophores are crucial for growth during iron limitation and virulence. This chain is Mevalonyl-coenzyme A hydratase sidH, found in Aspergillus fumigatus (strain ATCC MYA-4609 / CBS 101355 / FGSC A1100 / Af293) (Neosartorya fumigata).